A 217-amino-acid chain; its full sequence is Octanoyltransferase (217 aa).

A BPL/LPL catalytic domain is found at 32–207 (NDSPDELWIV…TLSQLLGYQH (176 aa)). Substrate is bound by residues 71–78 (RGGQVTYH), 138–140 (SLG), and 151–153 (GLA). The Acyl-thioester intermediate role is filled by cysteine 169.

It belongs to the LipB family.

The protein localises to the cytoplasm. It catalyses the reaction octanoyl-[ACP] + L-lysyl-[protein] = N(6)-octanoyl-L-lysyl-[protein] + holo-[ACP] + H(+). It participates in protein modification; protein lipoylation via endogenous pathway; protein N(6)-(lipoyl)lysine from octanoyl-[acyl-carrier-protein]: step 1/2. Catalyzes the transfer of endogenously produced octanoic acid from octanoyl-acyl-carrier-protein onto the lipoyl domains of lipoate-dependent enzymes. Lipoyl-ACP can also act as a substrate although octanoyl-ACP is likely to be the physiological substrate. The polypeptide is Octanoyltransferase (Shewanella oneidensis (strain ATCC 700550 / JCM 31522 / CIP 106686 / LMG 19005 / NCIMB 14063 / MR-1)).